A 566-amino-acid polypeptide reads, in one-letter code: MKAKLLVLLCALSATDADTICIGYHANNSTDTVDTVLEKNVTVTHSVNLLEDSHNGKLCRLKGIAPLQLGKCSIAGWILGNPECESLFSKKSWSYIAETPNSENGTCYPGYFADYEELREQLSSVSSFERFEIFPKERSWPKHNVTRGVTASCSHKGKSSFYRNLLWLTEKNGSYPNLSKSYVNNKEKEVLVLWGVHHPSNIEDQKTIYRKENAYVSVVSSNYNRRFTPEIAKRPKVRGQEGRINYYWTLLEPGDTIIFEANGNLIAPWYAFALSRGFGSGIITSNASMDECDTKCQTPQGAINSSLPFQNVHPVTIGECPKYVRSTKLRMVTGLRNIPSIQSRGLFGAIAGFIEGGWTGMIDGWYGYHHQNEQGSGYAADQKSTQNAINGITNKVNSVIEKMNTQFTAVGKEFNKLEKRMENLNKKVDDGFLDIWTYNAELLVLLENERTLDFHDSNVKNLYEKVKSQLKNNAKEIGNGCFEFYHKCNNECMESVKNGTYDYPKYSEESKLNREKIDGVKLESMGVYQILAIYSTVASSLCLLVSLGAISFWMCSNGSLQCRICI.

A signal peptide spans 1-17; sequence MKAKLLVLLCALSATDA. Residues 18–529 are Extracellular-facing; that stretch reads DTICIGYHAN…VKLESMGVYQ (512 aa). Intrachain disulfides connect Cys21/Cys481, Cys59/Cys292, Cys72/Cys84, Cys107/Cys153, Cys296/Cys320, and Cys488/Cys492. N-linked (GlcNAc...) asparagine; by host glycans are attached at residues Asn27, Asn28, and Asn40. Asn104, Asn144, Asn172, Asn177, Asn286, and Asn304 each carry an N-linked (GlcNAc...) asparagine; by host glycan. N-linked (GlcNAc...) asparagine; by host glycosylation is present at Asn498. Residues 530–550 form a helical membrane-spanning segment; it reads ILAIYSTVASSLCLLVSLGAI. Over 551 to 566 the chain is Cytoplasmic; it reads SFWMCSNGSLQCRICI. S-palmitoyl cysteine; by host attachment occurs at residues Cys555, Cys562, and Cys565.

Belongs to the influenza viruses hemagglutinin family. Homotrimer of disulfide-linked HA1-HA2. Interacts with human CACNA1C. In terms of processing, palmitoylated. In natural infection, inactive HA is matured into HA1 and HA2 outside the cell by one or more trypsin-like, arginine-specific endoprotease secreted by the bronchial epithelial cells. One identified protease that may be involved in this process is secreted in lungs by club cells.

It is found in the virion membrane. The protein localises to the host apical cell membrane. Its function is as follows. Binds to sialic acid-containing receptors on the cell surface, bringing about the attachment of the virus particle to the cell. This attachment induces virion internalization of about two third of the virus particles through clathrin-dependent endocytosis and about one third through a clathrin- and caveolin-independent pathway. Plays a major role in the determination of host range restriction and virulence. Class I viral fusion protein. Responsible for penetration of the virus into the cell cytoplasm by mediating the fusion of the membrane of the endocytosed virus particle with the endosomal membrane. Low pH in endosomes induces an irreversible conformational change in HA2, releasing the fusion hydrophobic peptide. Several trimers are required to form a competent fusion pore. Functionally, binds to sialic acid-containing receptors on the cell surface, bringing about the attachment of the virus particle to the cell. This attachment induces virion internalization either through clathrin-dependent endocytosis or through clathrin- and caveolin-independent pathway. Plays a major role in the determination of host range restriction and virulence. Class I viral fusion protein. Responsible for penetration of the virus into the cell cytoplasm by mediating the fusion of the membrane of the endocytosed virus particle with the endosomal membrane. Low pH in endosomes induces an irreversible conformational change in HA2, releasing the fusion hydrophobic peptide. Several trimers are required to form a competent fusion pore. This Influenza A virus (strain A/Kiev/59/1979 H1N1) protein is Hemagglutinin.